Here is a 249-residue protein sequence, read N- to C-terminus: 1-(5-phosphoribosyl)-5-[(5-phosphoribosylamino)methylideneamino] imidazole-4-carboxamide isomerase (249 aa).

D8 functions as the Proton acceptor in the catalytic mechanism. Catalysis depends on D130, which acts as the Proton donor.

This sequence belongs to the HisA/HisF family.

It localises to the cytoplasm. It carries out the reaction 1-(5-phospho-beta-D-ribosyl)-5-[(5-phospho-beta-D-ribosylamino)methylideneamino]imidazole-4-carboxamide = 5-[(5-phospho-1-deoxy-D-ribulos-1-ylimino)methylamino]-1-(5-phospho-beta-D-ribosyl)imidazole-4-carboxamide. It functions in the pathway amino-acid biosynthesis; L-histidine biosynthesis; L-histidine from 5-phospho-alpha-D-ribose 1-diphosphate: step 4/9. This is 1-(5-phosphoribosyl)-5-[(5-phosphoribosylamino)methylideneamino] imidazole-4-carboxamide isomerase from Nitrosococcus oceani (strain ATCC 19707 / BCRC 17464 / JCM 30415 / NCIMB 11848 / C-107).